The primary structure comprises 673 residues: Protein transport Sec1a (673 aa).

The tract at residues 538–591 (SSHKEESEARTGSVRKSSAPTAVPERKATPHSMRSRRTATWARPHSSDDGYSSD) is disordered.

The protein belongs to the STXBP/unc-18/SEC1 family. In terms of assembly, does not bind the syntaxin KNOLLE.

Its function is as follows. Involved in the vesicle trafficking. Binds syntaxins. The sequence is that of Protein transport Sec1a (SEC1A) from Arabidopsis thaliana (Mouse-ear cress).